Consider the following 174-residue polypeptide: Large ribosomal subunit protein uL10 (174 aa).

It belongs to the universal ribosomal protein uL10 family. As to quaternary structure, part of the ribosomal stalk of the 50S ribosomal subunit. The N-terminus interacts with L11 and the large rRNA to form the base of the stalk. The C-terminus forms an elongated spine to which L12 dimers bind in a sequential fashion forming a multimeric L10(L12)X complex.

Forms part of the ribosomal stalk, playing a central role in the interaction of the ribosome with GTP-bound translation factors. The sequence is that of Large ribosomal subunit protein uL10 from Anaeromyxobacter dehalogenans (strain 2CP-C).